A 562-amino-acid chain; its full sequence is Probable E3 ubiquitin-protein ligase ARI7 (562 aa).

The interval 1-39 (MDSEEDMLDAHDMESGEDDFYSGGTDDCNDSDDGEPDYG) is disordered. Residues 27–39 (DCNDSDDGEPDYG) are compositionally biased toward acidic residues. The TRIAD supradomain stretch occupies residues 133 to 346 (SELTCGICFD…GGFYACNRYE (214 aa)). Positions 137, 140, 154, 156, 159, 162, 182, 187, 226, 231, 248, 250, 255, 258, 263, 268, 295, and 298 each coordinate Zn(2+). An RING-type 1 zinc finger spans residues 137–187 (CGICFDSYPPEKIASVSCGHPFCTTCWTGYISTTINDGPGCLMLRCPDPSC). The segment at 206 to 268 (EKYNRYFLRS…TEEAHRPVDC (63 aa)) adopts an IBR-type zinc-finger fold. The RING-type 2; atypical zinc-finger motif lies at 295 to 325 (CPRCKRPIEKNQGCMHMTCTPPCKYEFCWLC). C308 is an active-site residue. C313, C317, C322, C325, H332, and C342 together coordinate Zn(2+). Positions 524–562 (ACSSKSTSSKSTGCSSKTRGKGKGSSRTGGSSRNPDDNL) are disordered. Residues 525–540 (CSSKSTSSKSTGCSSK) show a composition bias toward low complexity.

The protein belongs to the RBR family. Ariadne subfamily. It depends on Zn(2+) as a cofactor. Ubiquitous.

It carries out the reaction [E2 ubiquitin-conjugating enzyme]-S-ubiquitinyl-L-cysteine + [acceptor protein]-L-lysine = [E2 ubiquitin-conjugating enzyme]-L-cysteine + [acceptor protein]-N(6)-ubiquitinyl-L-lysine.. It functions in the pathway protein modification; protein ubiquitination. In terms of biological role, might act as an E3 ubiquitin-protein ligase, or as part of E3 complex, which accepts ubiquitin from specific E2 ubiquitin-conjugating enzymes and then transfers it to substrates. The chain is Probable E3 ubiquitin-protein ligase ARI7 (ARI7) from Arabidopsis thaliana (Mouse-ear cress).